Consider the following 395-residue polypeptide: Testis-expressed protein 44 (395 aa).

4 disordered regions span residues 1-32, 46-100, 133-215, and 235-258; these read MALP…PLTA, WQDI…LQVS, KMSQ…SDES, and FPPP…GRRP. Over residues 53 to 65 the composition is skewed to polar residues; that stretch reads SFKTATPRAISTS. Over residues 87–98 the composition is skewed to low complexity; it reads PLLPSQNPSPLQ. A compositionally biased stretch (basic and acidic residues) spans 192-207; the sequence is SAEEKAEHPKAPHPEA. Position 333 is a phosphoserine (S333).

As to expression, testis. Detected in germ cells at all stages of the seminiferous epithelium, strong expression in elongating spermatids (at protein level).

It localises to the cytoplasm. The chain is Testis-expressed protein 44 from Homo sapiens (Human).